A 684-amino-acid chain; its full sequence is Translation factor GUF1 homolog, mitochondrial (684 aa).

The region spanning 82-270 (HLIRNFSIIA…AVIERIPQPK (189 aa)) is the tr-type G domain. Residues 91-98 (AHVDHGKS), 163-167 (DTPGH), and 217-220 (NKID) each bind GTP.

It belongs to the TRAFAC class translation factor GTPase superfamily. Classic translation factor GTPase family. LepA subfamily.

The protein localises to the mitochondrion inner membrane. The enzyme catalyses GTP + H2O = GDP + phosphate + H(+). Its function is as follows. Promotes mitochondrial protein synthesis. May act as a fidelity factor of the translation reaction, by catalyzing a one-codon backward translocation of tRNAs on improperly translocated ribosomes. Binds to mitochondrial ribosomes in a GTP-dependent manner. The polypeptide is Translation factor GUF1 homolog, mitochondrial (Physcomitrium patens (Spreading-leaved earth moss)).